The chain runs to 304 residues: Foldase protein PrsA (304 aa).

The first 19 residues, 1–19 (MKKKLLSVAAVASVFTLAA), serve as a signal peptide directing secretion. Cys-20 is lipidated: N-palmitoyl cysteine. The S-diacylglycerol cysteine moiety is linked to residue Cys-20. Residues 140–231 (KVEVKASHIL…FGYHIIKVTD (92 aa)) form the PpiC domain. Residues 285 to 304 (FDLDKQEQQQMQQQMQQQQQ) are disordered. The segment covering 292-304 (QQQMQQQMQQQQQ) has biased composition (low complexity).

Belongs to the PrsA family.

The protein localises to the cell membrane. The enzyme catalyses [protein]-peptidylproline (omega=180) = [protein]-peptidylproline (omega=0). In terms of biological role, plays a major role in protein secretion by helping the post-translocational extracellular folding of several secreted proteins. This Exiguobacterium sibiricum (strain DSM 17290 / CCUG 55495 / CIP 109462 / JCM 13490 / 255-15) protein is Foldase protein PrsA.